The sequence spans 366 residues: UDP-N-acetylenolpyruvoylglucosamine reductase (366 aa).

Residues 27-197 (LGGPAAGFVV…LRVRFLLRDG (171 aa)) enclose the FAD-binding PCMH-type domain. The active site involves R175. Residue S252 is the Proton donor of the active site. The active site involves E358.

The protein belongs to the MurB family. The cofactor is FAD.

It localises to the cytoplasm. It catalyses the reaction UDP-N-acetyl-alpha-D-muramate + NADP(+) = UDP-N-acetyl-3-O-(1-carboxyvinyl)-alpha-D-glucosamine + NADPH + H(+). Its pathway is cell wall biogenesis; peptidoglycan biosynthesis. Functionally, cell wall formation. The protein is UDP-N-acetylenolpyruvoylglucosamine reductase of Saccharopolyspora erythraea (strain ATCC 11635 / DSM 40517 / JCM 4748 / NBRC 13426 / NCIMB 8594 / NRRL 2338).